A 207-amino-acid chain; its full sequence is uncharacterized protein (207 aa).

The first 19 residues, 1-19, serve as a signal peptide directing secretion; the sequence is MRFNVSFLLSLLLPTLAFA.

This sequence to P.multocida PM1509.

This is an uncharacterized protein from Pasteurella multocida (strain Pm70).